The following is a 493-amino-acid chain: Glutamyl-tRNA(Gln) amidotransferase subunit A (493 aa).

Active-site charge relay system residues include lysine 81 and serine 156. Serine 180 functions as the Acyl-ester intermediate in the catalytic mechanism.

This sequence belongs to the amidase family. GatA subfamily. In terms of assembly, heterotrimer of A, B and C subunits.

It catalyses the reaction L-glutamyl-tRNA(Gln) + L-glutamine + ATP + H2O = L-glutaminyl-tRNA(Gln) + L-glutamate + ADP + phosphate + H(+). Functionally, allows the formation of correctly charged Gln-tRNA(Gln) through the transamidation of misacylated Glu-tRNA(Gln) in organisms which lack glutaminyl-tRNA synthetase. The reaction takes place in the presence of glutamine and ATP through an activated gamma-phospho-Glu-tRNA(Gln). The sequence is that of Glutamyl-tRNA(Gln) amidotransferase subunit A from Mycolicibacterium paratuberculosis (strain ATCC BAA-968 / K-10) (Mycobacterium paratuberculosis).